The primary structure comprises 265 residues: Hydroxyethylthiazole kinase (265 aa).

Position 50 (methionine 50) interacts with substrate. Positions 125 and 171 each coordinate ATP. A substrate-binding site is contributed by glycine 198.

It belongs to the Thz kinase family. Requires Mg(2+) as cofactor.

It carries out the reaction 5-(2-hydroxyethyl)-4-methylthiazole + ATP = 4-methyl-5-(2-phosphooxyethyl)-thiazole + ADP + H(+). It functions in the pathway cofactor biosynthesis; thiamine diphosphate biosynthesis; 4-methyl-5-(2-phosphoethyl)-thiazole from 5-(2-hydroxyethyl)-4-methylthiazole: step 1/1. Its function is as follows. Catalyzes the phosphorylation of the hydroxyl group of 4-methyl-5-beta-hydroxyethylthiazole (THZ). The polypeptide is Hydroxyethylthiazole kinase (Salmonella paratyphi A (strain ATCC 9150 / SARB42)).